Here is a 398-residue protein sequence, read N- to C-terminus: Protein CDKN2AIP homolog A (398 aa).

One can recognise an XRN2-binding (XTBD) domain in the interval 19-124; sequence LELVHGECES…KVKKRGISSS (106 aa). Positions 118–245 are disordered; the sequence is KRGISSSNEG…SDNALKPTRR (128 aa). Over residues 131–147 the composition is skewed to basic and acidic residues; that stretch reads EPCKKQKSSDHGERESS. 3 stretches are compositionally biased toward polar residues: residues 154–163, 189–199, and 226–238; these read SDGNVPSTSL, RRSLPVSNAKS, and QTSM…SSDN.

It belongs to the CARF family.

Its subcellular location is the nucleus. The protein resides in the nucleoplasm. Functionally, may regulate DNA damage response and cell proliferation. This is Protein CDKN2AIP homolog A (cdkn2aip-a) from Xenopus laevis (African clawed frog).